Here is a 331-residue protein sequence, read N- to C-terminus: tRNA pseudouridine synthase B (331 aa).

Catalysis depends on aspartate 51, which acts as the Nucleophile.

It belongs to the pseudouridine synthase TruB family. Type 1 subfamily.

The catalysed reaction is uridine(55) in tRNA = pseudouridine(55) in tRNA. In terms of biological role, responsible for synthesis of pseudouridine from uracil-55 in the psi GC loop of transfer RNAs. The chain is tRNA pseudouridine synthase B from Verminephrobacter eiseniae (strain EF01-2).